The sequence spans 76 residues: Exodeoxyribonuclease 7 small subunit (76 aa).

It belongs to the XseB family. Heterooligomer composed of large and small subunits.

The protein localises to the cytoplasm. It catalyses the reaction Exonucleolytic cleavage in either 5'- to 3'- or 3'- to 5'-direction to yield nucleoside 5'-phosphates.. Its function is as follows. Bidirectionally degrades single-stranded DNA into large acid-insoluble oligonucleotides, which are then degraded further into small acid-soluble oligonucleotides. In Staphylococcus epidermidis (strain ATCC 35984 / DSM 28319 / BCRC 17069 / CCUG 31568 / BM 3577 / RP62A), this protein is Exodeoxyribonuclease 7 small subunit.